The sequence spans 122 residues: Holo-[acyl-carrier-protein] synthase (122 aa).

Mg(2+) contacts are provided by aspartate 9 and glutamate 58.

This sequence belongs to the P-Pant transferase superfamily. AcpS family. It depends on Mg(2+) as a cofactor.

Its subcellular location is the cytoplasm. It catalyses the reaction apo-[ACP] + CoA = holo-[ACP] + adenosine 3',5'-bisphosphate + H(+). Functionally, transfers the 4'-phosphopantetheine moiety from coenzyme A to a Ser of acyl-carrier-protein. The polypeptide is Holo-[acyl-carrier-protein] synthase (Chlamydia caviae (strain ATCC VR-813 / DSM 19441 / 03DC25 / GPIC) (Chlamydophila caviae)).